The primary structure comprises 190 residues: Elongation factor P-like protein (190 aa).

It belongs to the elongation factor P family.

The protein is Elongation factor P-like protein of Psychromonas ingrahamii (strain DSM 17664 / CCUG 51855 / 37).